A 110-amino-acid chain; its full sequence is Ig kappa chain V region 3547 (110 aa).

Residues 1–23 (AYDMTQTPSSVSAAVGGTVTINC) are framework-1. Positions 24-34 (QASEDISANLA) are complementarity-determining-1. Residues 35 to 49 (WYQQKPGQPPKLLIY) form a framework-2 region. A complementarity-determining-2 region spans residues 50–56 (AASDLAS). Residues 57-88 (GVPSRFKGSGSGTEYTLTISGVQCADAATYYC) form a framework-3 region. The complementarity-determining-3 stretch occupies residues 89–99 (QSADYSGSAVT). The tract at residues 100–109 (FGGGTEVVVK) is framework-4.

This Oryctolagus cuniculus (Rabbit) protein is Ig kappa chain V region 3547.